A 484-amino-acid chain; its full sequence is Glycogen synthase 2 (484 aa).

K15 is an ADP-alpha-D-glucose binding site.

The protein belongs to the glycosyltransferase 1 family. Bacterial/plant glycogen synthase subfamily.

It catalyses the reaction [(1-&gt;4)-alpha-D-glucosyl](n) + ADP-alpha-D-glucose = [(1-&gt;4)-alpha-D-glucosyl](n+1) + ADP + H(+). It participates in glycan biosynthesis; glycogen biosynthesis. Synthesizes alpha-1,4-glucan chains using ADP-glucose. This is Glycogen synthase 2 from Geobacter metallireducens (strain ATCC 53774 / DSM 7210 / GS-15).